The following is a 355-amino-acid chain: Histidinol-phosphate aminotransferase (355 aa).

An N6-(pyridoxal phosphate)lysine modification is found at K214.

Belongs to the class-II pyridoxal-phosphate-dependent aminotransferase family. Histidinol-phosphate aminotransferase subfamily. As to quaternary structure, homodimer. Requires pyridoxal 5'-phosphate as cofactor.

The catalysed reaction is L-histidinol phosphate + 2-oxoglutarate = 3-(imidazol-4-yl)-2-oxopropyl phosphate + L-glutamate. It participates in amino-acid biosynthesis; L-histidine biosynthesis; L-histidine from 5-phospho-alpha-D-ribose 1-diphosphate: step 7/9. The chain is Histidinol-phosphate aminotransferase (hisC) from Buchnera aphidicola subsp. Schizaphis graminum (strain Sg).